Reading from the N-terminus, the 96-residue chain is MYAVIETGSKQYLVKEGDVLKVEKLPFGENEEIELPALNIVKDGTVKFGGKVKAKVLSTAKDKKVLIFKHLPKKHSKKLRGHRQFYTKISILSIGE.

Belongs to the bacterial ribosomal protein bL21 family. Part of the 50S ribosomal subunit. Contacts protein L20.

This protein binds to 23S rRNA in the presence of protein L20. The protein is Large ribosomal subunit protein bL21 of Hydrogenobaculum sp. (strain Y04AAS1).